A 906-amino-acid chain; its full sequence is Protein translocase subunit SecA (906 aa).

Residues glutamine 87, 105–109 (GEGKT), and aspartate 521 each bind ATP. The segment covering 849–865 (STATAAEPAPEASQSQS) has biased composition (low complexity). The segment at 849–897 (STATAAEPAPEASQSQSTNDATASQNPPITEVEASKVGRNQPCPCGSGK) is disordered. Polar residues predominate over residues 866-876 (TNDATASQNPP). Zn(2+) is bound by residues cysteine 891, cysteine 893, cysteine 902, and cysteine 903.

Belongs to the SecA family. In terms of assembly, monomer and homodimer. Part of the essential Sec protein translocation apparatus which comprises SecA, SecYEG and auxiliary proteins SecDF-YajC and YidC. Zn(2+) is required as a cofactor.

Its subcellular location is the cell inner membrane. The protein localises to the cytoplasm. It catalyses the reaction ATP + H2O + cellular proteinSide 1 = ADP + phosphate + cellular proteinSide 2.. Functionally, part of the Sec protein translocase complex. Interacts with the SecYEG preprotein conducting channel. Has a central role in coupling the hydrolysis of ATP to the transfer of proteins into and across the cell membrane, serving both as a receptor for the preprotein-SecB complex and as an ATP-driven molecular motor driving the stepwise translocation of polypeptide chains across the membrane. The protein is Protein translocase subunit SecA of Dichelobacter nodosus (strain VCS1703A).